We begin with the raw amino-acid sequence, 87 residues long: MEIKFINIGFGNIVSANRIISIVSPESAPIKRIISEARDKGMLIDATYGRRTRAVIIMDSDHVILSAVQPETVAHRLNTKENQEENF.

It belongs to the RemA family.

This chain is Putative regulatory protein CHY_1489, found in Carboxydothermus hydrogenoformans (strain ATCC BAA-161 / DSM 6008 / Z-2901).